The sequence spans 59 residues: Bacteriocin curvacin-A (59 aa).

A propeptide spanning residues 1-18 is cleaved from the precursor; that stretch reads MNNVKELSMTELQTITGG. An intrachain disulfide couples C28 to C33.

Belongs to the bacteriocin class IIA/YGNGV family.

Its subcellular location is the secreted. Functionally, bactericidal activity; inhibits closely related Lactobacilli, Listeria monocytogenes and ivanovvi, Enterococcus faecalis, Carnobacterium sp and Brocothrix thermosphacta. This chain is Bacteriocin curvacin-A (curA), found in Latilactobacillus curvatus (Lactobacillus curvatus).